We begin with the raw amino-acid sequence, 374 residues long: Glutamate 5-kinase (374 aa).

Lys9 contacts ATP. Positions 49, 136, and 148 each coordinate substrate. ATP is bound by residues 168–169 (TD) and 210–216 (TGGMKSK). One can recognise a PUA domain in the interval 276 to 354 (SGVVRIDQGA…DEAKQLIPLV (79 aa)).

It belongs to the glutamate 5-kinase family.

The protein localises to the cytoplasm. It catalyses the reaction L-glutamate + ATP = L-glutamyl 5-phosphate + ADP. Its pathway is amino-acid biosynthesis; L-proline biosynthesis; L-glutamate 5-semialdehyde from L-glutamate: step 1/2. Its function is as follows. Catalyzes the transfer of a phosphate group to glutamate to form L-glutamate 5-phosphate. In Halalkalibacterium halodurans (strain ATCC BAA-125 / DSM 18197 / FERM 7344 / JCM 9153 / C-125) (Bacillus halodurans), this protein is Glutamate 5-kinase.